The chain runs to 29 residues: Galanin (29 aa).

Ala-29 is subject to Alanine amide.

The protein belongs to the galanin family.

The protein resides in the secreted. Functionally, contracts smooth muscle of the gastrointestinal and genitourinary tract, regulates growth hormone release, modulates insulin release, and may be involved in the control of adrenal secretion. In Amia calva (Bowfin), this protein is Galanin (gal).